Reading from the N-terminus, the 346-residue chain is Phenylalanine--tRNA ligase alpha subunit (346 aa).

Glu259 provides a ligand contact to Mg(2+).

It belongs to the class-II aminoacyl-tRNA synthetase family. Phe-tRNA synthetase alpha subunit type 1 subfamily. As to quaternary structure, tetramer of two alpha and two beta subunits. It depends on Mg(2+) as a cofactor.

It localises to the cytoplasm. It carries out the reaction tRNA(Phe) + L-phenylalanine + ATP = L-phenylalanyl-tRNA(Phe) + AMP + diphosphate + H(+). The polypeptide is Phenylalanine--tRNA ligase alpha subunit (Lactococcus lactis subsp. lactis (strain IL1403) (Streptococcus lactis)).